A 193-amino-acid polypeptide reads, in one-letter code: Proton-translocating ferredoxin:NAD(+) oxidoreductase complex subunit A (193 aa).

6 consecutive transmembrane segments (helical) span residues 11–31, 39–59, 62–82, 102–122, 134–154, and 171–191; these read AVVV…FFGV, VGMG…AWVV, FVLI…LLIA, MWGI…VPIL, VVNA…MASL, and GVAF…SGMI.

The protein belongs to the NqrDE/RnfAE family. The complex is composed of six subunits: RnfA, RnfB, RnfC, RnfD, RnfE and RnfG.

It localises to the cell membrane. In terms of biological role, part of a membrane-bound complex that couples electron transfer with translocation of ions across the membrane. Couples electron transfer from reduced ferredoxin to NAD(+) with translocation of H(+) out of the cell. Essential for energy conservation during autotrophic growth. Contributes to ATP synthesis during heterotrophic growth. This Clostridium ljungdahlii (strain ATCC 55383 / DSM 13528 / PETC) protein is Proton-translocating ferredoxin:NAD(+) oxidoreductase complex subunit A.